We begin with the raw amino-acid sequence, 184 residues long: Coordinator of PRMT5 and differentiation stimulator (184 aa).

Met-1 bears the N-acetylmethionine mark. Over residues 1 to 14 (MDLQAAGAQAQGAA) the composition is skewed to low complexity. The interval 1-136 (MDLQAAGAQA…PYDADDIQES (136 aa)) is disordered. The span at 42–56 (SSQERETEKAMDRLA) shows a compositional bias: basic and acidic residues. Phosphoserine occurs at positions 66 and 75. Residues 78-89 (EGFAMDEEDSDG) show a composition bias toward acidic residues.

Interacts with PRMT5. Interacts with histone H4; specifically interacts with the N-terminus of histone H4 but not with histone H3. Interacts with CBFB. Found in a complex with PRMT5, RUNX1 and CBFB.

The protein resides in the nucleus. Functionally, histone-binding protein required for histone H4 methyltransferase activity of PRMT5. Specifically required for histone H4 'Arg-3' methylation mediated by PRMT5, but not histone H3 'Arg-8' methylation, suggesting that it modulates the substrate specificity of PRMT5. Specifically interacts with the N-terminus of histone H4 but not with histone H3, suggesting that it acts by promoting the association between histone H4 and PRMT5. Involved in CCNE1 promoter repression. Plays a role in muscle cell differentiation by modulating the recruitment of PRMT5 to the promoter of genes involved in the coordination between cell cycle exit and muscle differentiation. The sequence is that of Coordinator of PRMT5 and differentiation stimulator (COPRS) from Homo sapiens (Human).